The primary structure comprises 626 residues: MARAVGIDLGTTNSCIATLEGGEPTVIVNAEGARTTPSVVAFSKSGEILVGEVAKRQAVTNVDRTISSVKRHMGSDWTVDIDGKKWTPQEISAQILMKLKRDAEAYLGEPVTDAVITCPAYFNDAQRQATKDAGKIAGLNVLRIINEPTAAALAYGLEKGKEDERILVFDLGGGTFDVSLLEIGKDDDGFSTIQVQATNGDNHLGGDDWDQKIIDWLVSEVKNKYGVDLSKDKIALQRLKEAAEQAKKELSSSTSTSISMQYLAMTPDGTPVHLDETLTRAHFEEMTSDLLGRCRTPFNNVLHDAGISVSDIDHVVLVGGSTRMPAVKELVKELTGGKEANQSVNPDEVVAVGAAVQSGVIKGDRKDVLLIDVTPLSLGIETKGGIMTKLIDRNTAIPTKRSEVFSTAEDNQPSVLIQVYQGEREFARDNKPLGTFELTGIAPAPRGVPQIEVTFDIDANGIVHVSAKDKGTGKEQSMTITGGSGLPKDEIDRMVKEAEAHEAEDKKRKEDAETRNQAEAFAYSTEKLVNDNKDKLSDDIVKEVTDKVNALKEALKGDDTEKVKTAQTELMTAAQKIGQVLYAQQGAEGAAAGADGAGASAGSASGSDDDTVEAEVVDDDDDKDNK.

T175 carries the phosphothreonine; by autocatalysis modification. Residues 586-606 (GAEGAAAGADGAGASAGSASG) show a composition bias toward low complexity. The segment at 586 to 626 (GAEGAAAGADGAGASAGSASGSDDDTVEAEVVDDDDDKDNK) is disordered. The span at 607 to 626 (SDDDTVEAEVVDDDDDKDNK) shows a compositional bias: acidic residues.

The protein belongs to the heat shock protein 70 family.

In terms of biological role, acts as a chaperone. The protein is Chaperone protein DnaK of Bifidobacterium longum (strain DJO10A).